A 667-amino-acid polypeptide reads, in one-letter code: WD40 repeat-containing protein DDB_G0271002 (667 aa).

2 WD repeats span residues 165-204 and 210-249; these read NHGV…PQET and KHKH…LLRI. The segment covering 278-293 has biased composition (low complexity); that stretch reads SSNSRDNNNNNSNSNN. 3 disordered regions span residues 278 to 301, 316 to 345, and 389 to 440; these read SSNS…GIII, LVEN…DNDD, and DIIF…ATTT. The span at 325–345 shows a compositional bias: acidic residues; it reads PMPEEEEEEEEEEVNQVDNDD. The span at 400 to 410 shows a compositional bias: low complexity; that stretch reads NQHQQQQQQNQ. Acidic residues predominate over residues 411–428; the sequence is EIEEEGQEGQEEQEDGTE. Residues 429 to 440 are compositionally biased toward low complexity; it reads NENNQGTIATTT.

The polypeptide is WD40 repeat-containing protein DDB_G0271002 (Dictyostelium discoideum (Social amoeba)).